The following is a 521-amino-acid chain: Cytochrome P450 monooxygenase astF (521 aa).

The chain crosses the membrane as a helical span at residues 14–34 (TMATFLLPVAIGTIILLFLYG). Residues asparagine 198, asparagine 218, asparagine 268, and asparagine 281 are each glycosylated (N-linked (GlcNAc...) asparagine). Cysteine 430 lines the heme pocket.

The protein belongs to the cytochrome P450 family. Requires heme as cofactor.

The protein localises to the membrane. The protein operates within secondary metabolite biosynthesis; terpenoid biosynthesis. Functionally, cytochrome P450 monooxygenase; part of the gene cluster that mediates the biosynthesis of astellolides, drimane-type sesquiterpene esters that show antimicrobial, anti-inflammatory, and anti-tumor activities. The first step in astellolide biosynthesis is performed by the sesquiterpene cyclase astC that catalyzes the formation of drimanyl pyrophosphate from farnesyl pyrophosphate. Drimanyl pyrophosphate is then dephosphorylated by the sesquiterpene phosphatase astI to produce drimanyl monophosphate which is further dephosphorylated to drim-8-ene-11-ol by atsK. Drim-8-ene-11-ol is converted to confertifolin, probably by the cytochrome P450 monooxygenase astD and/or the dehydrogenase astE. The cytochrome P450 monooxygenases astB, astF and astJ then hydroxylate confertifolin at C6, C14, or C15 to form trihydroxy confertifolin. The nonribosomal peptide synthetase astA catalyzes ester bond formation between trihydroxy contifolin and benzoic acid (BA) or 4-hydroxy benzoic acid (4HBA), leading to the formation of dideacetyl astellolides A and B, respectively. Finally, the O-acetyltransferase astG converts dideacetyl astellolides A and B into deacetyl astellolides A and B. In Aspergillus oryzae (strain ATCC 42149 / RIB 40) (Yellow koji mold), this protein is Cytochrome P450 monooxygenase astF.